The primary structure comprises 215 residues: Glycerol-3-phosphate acyltransferase (215 aa).

Helical transmembrane passes span Leu3–Gly23, Thr42–Ile61, Thr68–Leu90, Ala110–Leu130, Leu134–Leu154, and Leu162–Ile182.

This sequence belongs to the PlsY family. In terms of assembly, probably interacts with PlsX.

It localises to the cell membrane. It catalyses the reaction an acyl phosphate + sn-glycerol 3-phosphate = a 1-acyl-sn-glycero-3-phosphate + phosphate. It participates in lipid metabolism; phospholipid metabolism. Catalyzes the transfer of an acyl group from acyl-phosphate (acyl-PO(4)) to glycerol-3-phosphate (G3P) to form lysophosphatidic acid (LPA). This enzyme utilizes acyl-phosphate as fatty acyl donor, but not acyl-CoA or acyl-ACP. The protein is Glycerol-3-phosphate acyltransferase of Streptococcus equi subsp. zooepidemicus (strain MGCS10565).